A 157-amino-acid chain; its full sequence is 2-C-methyl-D-erythritol 2,4-cyclodiphosphate synthase (157 aa).

Asp-8 and His-10 together coordinate a divalent metal cation. Residues 8-10 (DVH) and 34-35 (HS) each bind 4-CDP-2-C-methyl-D-erythritol 2-phosphate. His-42 provides a ligand contact to a divalent metal cation. 4-CDP-2-C-methyl-D-erythritol 2-phosphate contacts are provided by residues 56-58 (DIG), 61-65 (FPDTD), 100-106 (AQAPKMA), 132-135 (TTTE), Phe-139, and Arg-142.

It belongs to the IspF family. In terms of assembly, homotrimer. It depends on a divalent metal cation as a cofactor.

The enzyme catalyses 4-CDP-2-C-methyl-D-erythritol 2-phosphate = 2-C-methyl-D-erythritol 2,4-cyclic diphosphate + CMP. The protein operates within isoprenoid biosynthesis; isopentenyl diphosphate biosynthesis via DXP pathway; isopentenyl diphosphate from 1-deoxy-D-xylulose 5-phosphate: step 4/6. Its function is as follows. Involved in the biosynthesis of isopentenyl diphosphate (IPP) and dimethylallyl diphosphate (DMAPP), two major building blocks of isoprenoid compounds. Catalyzes the conversion of 4-diphosphocytidyl-2-C-methyl-D-erythritol 2-phosphate (CDP-ME2P) to 2-C-methyl-D-erythritol 2,4-cyclodiphosphate (ME-CPP) with a corresponding release of cytidine 5-monophosphate (CMP). This is 2-C-methyl-D-erythritol 2,4-cyclodiphosphate synthase from Pseudomonas putida (strain GB-1).